The primary structure comprises 410 residues: BTB and MATH domain-containing protein 42 (410 aa).

Residues 1–19 are compositionally biased toward polar residues; it reads MSSRSSWSSTEQINRTISS. The interval 1 to 29 is disordered; the sequence is MSSRSSWSSTEQINRTISSRADDLPPQPR. Residues 45–173 form the MATH domain; that stretch reads STKLEWKIEQ…DGTLFLICEV (129 aa). The BTB domain maps to 219-287; sequence TDCVIHVGNK…MYTGATESLE (69 aa). Positions 389–410 are disordered; it reads TSNIPISVSPPPARKRLRRSAK. Residues 401 to 410 show a composition bias toward basic residues; the sequence is ARKRLRRSAK.

As to quaternary structure, interacts with cul-3.

It functions in the pathway protein modification; protein ubiquitination. Probable substrate-specific adapter of an E3 ubiquitin-protein ligase complex which mediates the ubiquitination and subsequent proteasomal degradation of target proteins. The protein is BTB and MATH domain-containing protein 42 (bath-42) of Caenorhabditis elegans.